The sequence spans 336 residues: Dihydrolipoyl dehydrogenase (336 aa).

Residues 34–42, Lys-51, and Gly-115 each bind FAD; that span reads EKEVVGGIC. An intrachain disulfide couples Cys-42 to Cys-47. NAD(+) is bound by residues 180–184, Glu-203, Val-237, and 264–267; these read GGGVI and SVGT. 2 residues coordinate FAD: Asp-304 and Ala-312.

It belongs to the class-I pyridine nucleotide-disulfide oxidoreductase family. As to quaternary structure, homodimer. The cofactor is FAD.

Its subcellular location is the cytoplasm. It catalyses the reaction N(6)-[(R)-dihydrolipoyl]-L-lysyl-[protein] + NAD(+) = N(6)-[(R)-lipoyl]-L-lysyl-[protein] + NADH + H(+). In terms of biological role, lipoamide dehydrogenase is a component of the alpha-ketoacid dehydrogenase complexes. This Acholeplasma laidlawii protein is Dihydrolipoyl dehydrogenase (pdhD).